The primary structure comprises 362 residues: GTP cyclohydrolase FolE2 (362 aa).

Belongs to the GTP cyclohydrolase IV family.

It catalyses the reaction GTP + H2O = 7,8-dihydroneopterin 3'-triphosphate + formate + H(+). It functions in the pathway cofactor biosynthesis; 7,8-dihydroneopterin triphosphate biosynthesis; 7,8-dihydroneopterin triphosphate from GTP: step 1/1. Functionally, converts GTP to 7,8-dihydroneopterin triphosphate. This chain is GTP cyclohydrolase FolE2, found in Jannaschia sp. (strain CCS1).